The chain runs to 957 residues: Isoleucine--tRNA ligase (957 aa).

The 'HIGH' region motif lies at 57-67 (PYANGDIHIGH). Glu594 is a binding site for L-isoleucyl-5'-AMP. A 'KMSKS' region motif is present at residues 635-639 (KMSKS). An ATP-binding site is contributed by Lys638. Positions 920, 923, 940, and 943 each coordinate Zn(2+).

The protein belongs to the class-I aminoacyl-tRNA synthetase family. IleS type 1 subfamily. In terms of assembly, monomer. Zn(2+) is required as a cofactor.

The protein resides in the cytoplasm. The enzyme catalyses tRNA(Ile) + L-isoleucine + ATP = L-isoleucyl-tRNA(Ile) + AMP + diphosphate. In terms of biological role, catalyzes the attachment of isoleucine to tRNA(Ile). As IleRS can inadvertently accommodate and process structurally similar amino acids such as valine, to avoid such errors it has two additional distinct tRNA(Ile)-dependent editing activities. One activity is designated as 'pretransfer' editing and involves the hydrolysis of activated Val-AMP. The other activity is designated 'posttransfer' editing and involves deacylation of mischarged Val-tRNA(Ile). The chain is Isoleucine--tRNA ligase from Laribacter hongkongensis (strain HLHK9).